The chain runs to 156 residues: Small ribosomal subunit protein uS7 (156 aa).

This sequence belongs to the universal ribosomal protein uS7 family. As to quaternary structure, part of the 30S ribosomal subunit. Contacts proteins S9 and S11.

Functionally, one of the primary rRNA binding proteins, it binds directly to 16S rRNA where it nucleates assembly of the head domain of the 30S subunit. Is located at the subunit interface close to the decoding center, probably blocks exit of the E-site tRNA. In Arthrospira platensis (Spirulina platensis), this protein is Small ribosomal subunit protein uS7.